The primary structure comprises 344 residues: MASGVGAAFEELPHDGTCDECEPDEAPGAEEVCRECGFCYCRRHAEAHRQKFLSHHLAEYVHGAQAWTPPADGEGAGKEEAEVKVEQEREIESEAGEESESEEESESEEESETEEESEDESDEESEEDSEEEMEDEQESEAEEDNQEEGESEAEGETEAESEFDPEIEMEAERVAKRKCPDHGLDLSTYCQEDRQLICVLCPVIGAHQGHQLSTLDEAFEELRSKDSGGLKAAMIELVERLKFKSSDPKVTRDQMKMFIQQEFKKVQKVIADEEQKALHLVDIQEAMATAHVTEILADIQSHMDRLMTQMAQAKEQLDTSNESAEPKAEGDEEGPSGASEEEDT.

Disordered stretches follow at residues 1-25 (MASG…EPDE) and 68-165 (TPPA…EFDP). Over residues 75 to 92 (GAGKEEAEVKVEQEREIE) the composition is skewed to basic and acidic residues. Residues 93–165 (SEAGEESESE…ETEAESEFDP (73 aa)) show a composition bias toward acidic residues. The B box-type zinc-finger motif lies at 174–215 (VAKRKCPDHGLDLSTYCQEDRQLICVLCPVIGAHQGHQLSTL). Residues Cys179, His182, Cys201, and His207 each contribute to the Zn(2+) site. A coiled-coil region spans residues 290-325 (AHVTEILADIQSHMDRLMTQMAQAKEQLDTSNESAE). A disordered region spans residues 309-344 (QMAQAKEQLDTSNESAEPKAEGDEEGPSGASEEEDT). Over residues 330 to 344 (GDEEGPSGASEEEDT) the composition is skewed to acidic residues. Phosphoserine occurs at positions 336 and 339.

As to quaternary structure, interacts (via coiled coil) with TRIM17 (via coiled coil).

In terms of biological role, may play a role in the process of differentiation and maturation of neuronal cells. May regulate the activity of TRIM17. Is a negative regulator of PAX6 expression. This is Tripartite motif-containing protein 44 (TRIM44) from Pongo abelii (Sumatran orangutan).